Here is a 323-residue protein sequence, read N- to C-terminus: Acetyl-coenzyme A carboxylase carboxyl transferase subunit alpha (323 aa).

In terms of domain architecture, CoA carboxyltransferase C-terminal spans arginine 39–glutamine 293.

Belongs to the AccA family. As to quaternary structure, acetyl-CoA carboxylase is a heterohexamer composed of biotin carboxyl carrier protein (AccB), biotin carboxylase (AccC) and two subunits each of ACCase subunit alpha (AccA) and ACCase subunit beta (AccD).

Its subcellular location is the cytoplasm. The catalysed reaction is N(6)-carboxybiotinyl-L-lysyl-[protein] + acetyl-CoA = N(6)-biotinyl-L-lysyl-[protein] + malonyl-CoA. It participates in lipid metabolism; malonyl-CoA biosynthesis; malonyl-CoA from acetyl-CoA: step 1/1. Functionally, component of the acetyl coenzyme A carboxylase (ACC) complex. First, biotin carboxylase catalyzes the carboxylation of biotin on its carrier protein (BCCP) and then the CO(2) group is transferred by the carboxyltransferase to acetyl-CoA to form malonyl-CoA. This is Acetyl-coenzyme A carboxylase carboxyl transferase subunit alpha from Paraburkholderia phymatum (strain DSM 17167 / CIP 108236 / LMG 21445 / STM815) (Burkholderia phymatum).